A 276-amino-acid chain; its full sequence is Small ribosomal subunit protein uS3 (276 aa).

The KH type-2 domain occupies 39–110; it reads IRRETMKFLK…KINIKIKEIK (72 aa).

This sequence belongs to the universal ribosomal protein uS3 family. Part of the 30S ribosomal subunit. Forms a tight complex with proteins S10 and S14.

Binds the lower part of the 30S subunit head. Binds mRNA in the 70S ribosome, positioning it for translation. This Borrelia turicatae (strain 91E135) protein is Small ribosomal subunit protein uS3.